Here is a 189-residue protein sequence, read N- to C-terminus: Putative biopolymer transport protein ExbB-like 1 (189 aa).

The next 3 membrane-spanning stretches (helical) occupy residues 14 to 34, 99 to 119, and 147 to 167; these read FVTTLVLVWISLYLVMTLWVF, LVVLSIISSTAPFIGLFGTVV, and LIATAAGILAAIPAYSFYLIL.

The protein belongs to the ExbB/TolQ family.

It localises to the cell inner membrane. The sequence is that of Putative biopolymer transport protein ExbB-like 1 from Helicobacter pylori (strain J99 / ATCC 700824) (Campylobacter pylori J99).